Consider the following 155-residue polypeptide: Interleukin-2 (155 aa).

The first 20 residues, 1–20, serve as a signal peptide directing secretion; it reads MYRMQLLSCIALTLALVANG. A glycan (O-linked (GalNAc...) threonine) is linked at Thr-23. A disulfide bond links Cys-79 and Cys-127.

This sequence belongs to the IL-2 family.

It localises to the secreted. Functionally, cytokine produced by activated CD4-positive helper T-cells and to a lesser extend activated CD8-positive T-cells and natural killer (NK) cells that plays pivotal roles in the immune response and tolerance. Binds to a receptor complex composed of either the high-affinity trimeric IL-2R (IL2RA/CD25, IL2RB/CD122 and IL2RG/CD132) or the low-affinity dimeric IL-2R (IL2RB and IL2RG). Interaction with the receptor leads to oligomerization and conformation changes in the IL-2R subunits resulting in downstream signaling starting with phosphorylation of JAK1 and JAK3. In turn, JAK1 and JAK3 phosphorylate the receptor to form a docking site leading to the phosphorylation of several substrates including STAT5. This process leads to activation of several pathways including STAT, phosphoinositide-3-kinase/PI3K and mitogen-activated protein kinase/MAPK pathways. Functions as a T-cell growth factor and can increase NK-cell cytolytic activity as well. Promotes strong proliferation of activated B-cells and subsequently immunoglobulin production. Plays a pivotal role in regulating the adaptive immune system by controlling the survival and proliferation of regulatory T-cells, which are required for the maintenance of immune tolerance. Moreover, participates in the differentiation and homeostasis of effector T-cell subsets, including Th1, Th2, Th17 as well as memory CD8-positive T-cells. This chain is Interleukin-2 (IL2), found in Capra hircus (Goat).